The sequence spans 387 residues: Phosphoglycerate kinase (387 aa).

Substrate contacts are provided by residues 21–23 (DLN), arginine 36, 59–62 (HLGR), arginine 114, and arginine 147. ATP-binding positions include lysine 198, glutamate 314, and 340 to 343 (GGDT).

The protein belongs to the phosphoglycerate kinase family. As to quaternary structure, monomer.

The protein localises to the cytoplasm. It catalyses the reaction (2R)-3-phosphoglycerate + ATP = (2R)-3-phospho-glyceroyl phosphate + ADP. The protein operates within carbohydrate degradation; glycolysis; pyruvate from D-glyceraldehyde 3-phosphate: step 2/5. The polypeptide is Phosphoglycerate kinase (Erwinia tasmaniensis (strain DSM 17950 / CFBP 7177 / CIP 109463 / NCPPB 4357 / Et1/99)).